Reading from the N-terminus, the 203-residue chain is Ribosomal RNA large subunit methyltransferase E (203 aa).

S-adenosyl-L-methionine-binding residues include Gly59, Trp61, Asp79, Asp97, and Asp119. Lys159 (proton acceptor) is an active-site residue.

This sequence belongs to the class I-like SAM-binding methyltransferase superfamily. RNA methyltransferase RlmE family.

The protein localises to the cytoplasm. The catalysed reaction is uridine(2552) in 23S rRNA + S-adenosyl-L-methionine = 2'-O-methyluridine(2552) in 23S rRNA + S-adenosyl-L-homocysteine + H(+). Its function is as follows. Specifically methylates the uridine in position 2552 of 23S rRNA at the 2'-O position of the ribose in the fully assembled 50S ribosomal subunit. In Desulforapulum autotrophicum (strain ATCC 43914 / DSM 3382 / VKM B-1955 / HRM2) (Desulfobacterium autotrophicum), this protein is Ribosomal RNA large subunit methyltransferase E.